Consider the following 251-residue polypeptide: 1-(5-phosphoribosyl)-5-[(5-phosphoribosylamino)methylideneamino] imidazole-4-carboxamide isomerase (251 aa).

Catalysis depends on Asp-8, which acts as the Proton acceptor. Asp-131 functions as the Proton donor in the catalytic mechanism.

This sequence belongs to the HisA/HisF family.

It localises to the cytoplasm. It catalyses the reaction 1-(5-phospho-beta-D-ribosyl)-5-[(5-phospho-beta-D-ribosylamino)methylideneamino]imidazole-4-carboxamide = 5-[(5-phospho-1-deoxy-D-ribulos-1-ylimino)methylamino]-1-(5-phospho-beta-D-ribosyl)imidazole-4-carboxamide. It participates in amino-acid biosynthesis; L-histidine biosynthesis; L-histidine from 5-phospho-alpha-D-ribose 1-diphosphate: step 4/9. This chain is 1-(5-phosphoribosyl)-5-[(5-phosphoribosylamino)methylideneamino] imidazole-4-carboxamide isomerase, found in Burkholderia vietnamiensis (strain G4 / LMG 22486) (Burkholderia cepacia (strain R1808)).